A 268-amino-acid polypeptide reads, in one-letter code: MAARKAAKKLTDRIPRPKKKVTWPQARAFSVHLLTASGSFLAFLSLVAASEERWTAMFWWLGLALFVDGIDGPIARKLEVKEILPTWSGELLDNIIDYVTYVLIPAFALYQRGFMGEGLSFLSAAIIVVSSAIYYADTGMKTKENFFKGFPVVWNMVVFTLFVIEPGQWVSFAVVVVAGILTFVPINFIHPVRVVRLRPFNLTMTLLWCAFGALALAQAALAAFYDQIGVLGAQVSTFIKIGITITGLYLACIGGIMQFFPNLGAKKA.

Over 1-27 (MAARKAAKKLTDRIPRPKKKVTWPQAR) the chain is Cytoplasmic. Residues 28-48 (AFSVHLLTASGSFLAFLSLVA) form a helical membrane-spanning segment. The Periplasmic segment spans residues 49-53 (ASEER). A helical transmembrane segment spans residues 54–74 (WTAMFWWLGLALFVDGIDGPI). Residues 75-88 (ARKLEVKEILPTWS) lie on the Cytoplasmic side of the membrane. Residues 89-109 (GELLDNIIDYVTYVLIPAFAL) form a helical membrane-spanning segment. Over 110–112 (YQR) the chain is Periplasmic. Residues 113 to 133 (GFMGEGLSFLSAAIIVVSSAI) form a helical membrane-spanning segment. The Cytoplasmic segment spans residues 134 to 145 (YYADTGMKTKEN). Residues 146–166 (FFKGFPVVWNMVVFTLFVIEP) form a helical membrane-spanning segment. Topologically, residues 167 to 168 (GQ) are periplasmic. The helical transmembrane segment at 169-189 (WVSFAVVVVAGILTFVPINFI) threads the bilayer. Residues 190 to 203 (HPVRVVRLRPFNLT) lie on the Cytoplasmic side of the membrane. A helical membrane pass occupies residues 204–224 (MTLLWCAFGALALAQAALAAF). Residues 225–240 (YDQIGVLGAQVSTFIK) are Periplasmic-facing. Residues 241–261 (IGITITGLYLACIGGIMQFFP) traverse the membrane as a helical segment. The Cytoplasmic segment spans residues 262 to 268 (NLGAKKA).

It belongs to the CDP-alcohol phosphatidyltransferase class-I family. It depends on Mn(2+) as a cofactor.

Its subcellular location is the cell inner membrane. It carries out the reaction a CDP-1,2-diacyl-sn-glycerol + choline = a 1,2-diacyl-sn-glycero-3-phosphocholine + CMP + H(+). In terms of biological role, condenses choline with CDP-diglyceride to produce phosphatidylcholine and CMP. The chain is Phosphatidylcholine synthase (pcs) from Mesorhizobium japonicum (strain LMG 29417 / CECT 9101 / MAFF 303099) (Mesorhizobium loti (strain MAFF 303099)).